We begin with the raw amino-acid sequence, 210 residues long: Uracil phosphoribosyltransferase (210 aa).

Residues Arg-80, Arg-105, and 132–140 each bind 5-phospho-alpha-D-ribose 1-diphosphate; that span reads DPMLATGGS. Uracil-binding positions include Ile-195 and 200 to 202; that span reads GDA. Residue Asp-201 participates in 5-phospho-alpha-D-ribose 1-diphosphate binding.

This sequence belongs to the UPRTase family. Requires Mg(2+) as cofactor.

The enzyme catalyses UMP + diphosphate = 5-phospho-alpha-D-ribose 1-diphosphate + uracil. Its pathway is pyrimidine metabolism; UMP biosynthesis via salvage pathway; UMP from uracil: step 1/1. Its activity is regulated as follows. Allosterically activated by GTP. Catalyzes the conversion of uracil and 5-phospho-alpha-D-ribose 1-diphosphate (PRPP) to UMP and diphosphate. The sequence is that of Uracil phosphoribosyltransferase from Deinococcus radiodurans (strain ATCC 13939 / DSM 20539 / JCM 16871 / CCUG 27074 / LMG 4051 / NBRC 15346 / NCIMB 9279 / VKM B-1422 / R1).